Consider the following 379-residue polypeptide: Chaperone protein DnaJ (379 aa).

In terms of domain architecture, J spans 5 to 69; the sequence is EYYERLGVDK…QKRAAYDQYG (65 aa). The CR-type zinc-finger motif lies at 141–223; that stretch reads GVEKQVKYNR…CHGSGHEKVA (83 aa). The Zn(2+) site is built by Cys-154, Cys-157, Cys-171, Cys-174, Cys-197, Cys-200, Cys-211, and Cys-214. 4 CXXCXGXG motif repeats span residues 154–161, 171–178, 197–204, and 211–218; these read CHTCGGSG, CHKCGGRG, CDVCHGTG, and CTTCHGSG.

The protein belongs to the DnaJ family. As to quaternary structure, homodimer. The cofactor is Zn(2+).

Its subcellular location is the cytoplasm. Functionally, participates actively in the response to hyperosmotic and heat shock by preventing the aggregation of stress-denatured proteins and by disaggregating proteins, also in an autonomous, DnaK-independent fashion. Unfolded proteins bind initially to DnaJ; upon interaction with the DnaJ-bound protein, DnaK hydrolyzes its bound ATP, resulting in the formation of a stable complex. GrpE releases ADP from DnaK; ATP binding to DnaK triggers the release of the substrate protein, thus completing the reaction cycle. Several rounds of ATP-dependent interactions between DnaJ, DnaK and GrpE are required for fully efficient folding. Also involved, together with DnaK and GrpE, in the DNA replication of plasmids through activation of initiation proteins. The polypeptide is Chaperone protein DnaJ (Lactococcus lactis subsp. cremoris (strain MG1363)).